We begin with the raw amino-acid sequence, 157 residues long: Aspartate carbamoyltransferase regulatory chain (157 aa).

Zn(2+) contacts are provided by Cys108, Cys113, Cys138, and Cys141.

Belongs to the PyrI family. In terms of assembly, contains catalytic and regulatory chains. It depends on Zn(2+) as a cofactor.

Functionally, involved in allosteric regulation of aspartate carbamoyltransferase. In Korarchaeum cryptofilum (strain OPF8), this protein is Aspartate carbamoyltransferase regulatory chain.